Reading from the N-terminus, the 126-residue chain is Desulfoferrodoxin (126 aa).

Cysteine 10, cysteine 13, cysteine 29, cysteine 30, histidine 49, histidine 69, histidine 75, cysteine 116, and histidine 119 together coordinate Fe cation.

This sequence belongs to the desulfoferrodoxin family. As to quaternary structure, homodimer. It depends on Fe(3+) as a cofactor. Cu(2+) is required as a cofactor.

It catalyses the reaction reduced [rubredoxin] + superoxide + 2 H(+) = oxidized [rubredoxin] + H2O2. Catalyzes the one-electron reduction of superoxide anion radical to hydrogen peroxide at a nonheme ferrous iron center. Plays a fundamental role in case of oxidative stress via its superoxide detoxification activity. This is Desulfoferrodoxin (dfx) from Nitratidesulfovibrio vulgaris (strain ATCC 29579 / DSM 644 / CCUG 34227 / NCIMB 8303 / VKM B-1760 / Hildenborough) (Desulfovibrio vulgaris).